A 426-amino-acid polypeptide reads, in one-letter code: Tyrosine--tRNA ligase (426 aa).

Residue Y38 participates in L-tyrosine binding. The short motif at P43–S52 is the 'HIGH' region element. 2 residues coordinate L-tyrosine: Y176 and Q180. The 'KMSKS' region signature appears at K236–T240. K239 is an ATP binding site. In terms of domain architecture, S4 RNA-binding spans Q359–K426.

This sequence belongs to the class-I aminoacyl-tRNA synthetase family. TyrS type 1 subfamily. Homodimer.

The protein resides in the cytoplasm. The enzyme catalyses tRNA(Tyr) + L-tyrosine + ATP = L-tyrosyl-tRNA(Tyr) + AMP + diphosphate + H(+). Catalyzes the attachment of tyrosine to tRNA(Tyr) in a two-step reaction: tyrosine is first activated by ATP to form Tyr-AMP and then transferred to the acceptor end of tRNA(Tyr). The polypeptide is Tyrosine--tRNA ligase (Aliivibrio fischeri (strain ATCC 700601 / ES114) (Vibrio fischeri)).